Here is a 144-residue protein sequence, read N- to C-terminus: Large ribosomal subunit protein uL13 (144 aa).

Belongs to the universal ribosomal protein uL13 family. In terms of assembly, part of the 50S ribosomal subunit.

Functionally, this protein is one of the early assembly proteins of the 50S ribosomal subunit, although it is not seen to bind rRNA by itself. It is important during the early stages of 50S assembly. This is Large ribosomal subunit protein uL13 from Pelotomaculum thermopropionicum (strain DSM 13744 / JCM 10971 / SI).